Here is a 494-residue protein sequence, read N- to C-terminus: Endoglucanase 1 (494 aa).

An N-terminal signal peptide occupies residues 1–25 (MDCSSPLSLFHLLLVCTVMVKCCSA). Residue D82 is the Nucleophile of the active site. 2 N-linked (GlcNAc...) asparagine glycosylation sites follow: N254 and N359. Catalysis depends on residues H411, D462, and E471.

It belongs to the glycosyl hydrolase 9 (cellulase E) family.

The enzyme catalyses Endohydrolysis of (1-&gt;4)-beta-D-glucosidic linkages in cellulose, lichenin and cereal beta-D-glucans.. Involved in ripening fruit process. The polypeptide is Endoglucanase 1 (CEL1) (Persea americana (Avocado)).